The chain runs to 234 residues: MIIMTILSLLLTNAVTLRRDISILFNRIVIIALIYCILHDTMSLSIISKGVGLHGGLLHITNITQVFQIFIFLISILILQLTSFDPIKKFYIMRHPRFINKWPRAIGYSIPLSTPLPPPLRGGGVDLFILLDACLLWANSGTISRSPDFIITKLYCIFHCSFILLGLGVGGLLYGSSTTSLDGLYIINSIQSHVNYSIINPLYRHFNKIQIKMLNNKFLRLSMGAILAHANYDT.

Helical transmembrane passes span 28–48 (IVII…SIIS), 67–87 (FQIF…FDPI), 123–143 (GGVD…SGTI), and 154–174 (LYCI…GLLY).

Belongs to the complex I subunit 2 family.

It localises to the mitochondrion membrane. This is an uncharacterized protein from Neurospora crassa (strain ATCC 24698 / 74-OR23-1A / CBS 708.71 / DSM 1257 / FGSC 987).